Reading from the N-terminus, the 206-residue chain is N-(5'-phosphoribosyl)anthranilate isomerase (206 aa).

This sequence belongs to the TrpF family.

The enzyme catalyses N-(5-phospho-beta-D-ribosyl)anthranilate = 1-(2-carboxyphenylamino)-1-deoxy-D-ribulose 5-phosphate. The protein operates within amino-acid biosynthesis; L-tryptophan biosynthesis; L-tryptophan from chorismate: step 3/5. The protein is N-(5'-phosphoribosyl)anthranilate isomerase of Citrifermentans bemidjiense (strain ATCC BAA-1014 / DSM 16622 / JCM 12645 / Bem) (Geobacter bemidjiensis).